A 518-amino-acid chain; its full sequence is Probable alginate O-acetylase AlgI (518 aa).

8 helical membrane passes run 2–24, 39–61, 78–100, 115–137, 150–172, 319–341, 354–373, and 402–424; these read VFSS…YLSG, FYAW…NYWI, WLLL…NFGV, FILT…ISYI, NLID…VLRF, GLWH…WLAI, FNVI…WVIF, and ASLT…FFGL. Residue His-322 is part of the active site. The interval 435–456 is disordered; the sequence is SGKSARADGPATEQPGTIKAVP. The chain crosses the membrane as a helical span at residues 493–515; that stretch reads LILLLFVASILKLSAQSFSPFLY.

This sequence belongs to the membrane-bound acyltransferase family.

It localises to the cell inner membrane. The protein operates within glycan biosynthesis; alginate biosynthesis. Together with AlgJ and AlgF, forms an inner membrane complex which probably interacts with the alginate polymerization-transport complex and adds acetyl groups at the O-2 and O-3 positions of mannuronate residues. Acetylation of alginate is important for the architecture of biofilms and increases the ability of alginate to act as a defense barrier. This chain is Probable alginate O-acetylase AlgI (algI), found in Pseudomonas syringae pv. tomato (strain ATCC BAA-871 / DC3000).